Reading from the N-terminus, the 483-residue chain is Glycogen synthase (483 aa).

Lys-15 contributes to the ADP-alpha-D-glucose binding site.

Belongs to the glycosyltransferase 1 family. Bacterial/plant glycogen synthase subfamily.

The enzyme catalyses [(1-&gt;4)-alpha-D-glucosyl](n) + ADP-alpha-D-glucose = [(1-&gt;4)-alpha-D-glucosyl](n+1) + ADP + H(+). The protein operates within glycan biosynthesis; glycogen biosynthesis. Functionally, synthesizes alpha-1,4-glucan chains using ADP-glucose. The chain is Glycogen synthase from Thioalkalivibrio sulfidiphilus (strain HL-EbGR7).